A 418-amino-acid polypeptide reads, in one-letter code: 6-methylpretetramide 4-monooxygenase (418 aa).

FAD-binding positions include 15–44 (DVCV…LVER) and 289–299 (WARDGLLLIGD).

Belongs to the PheA/TfdB FAD monooxygenase family. FAD serves as cofactor.

The catalysed reaction is 6-methylpretetramide + NADPH + O2 + 2 H(+) = 4-hydroxy-6-methylpretetramide + NADP(+) + H2O. It participates in antibiotic biosynthesis; oxytetracycline biosynthesis. Functionally, involved in the biosynthesis of the tetracycline antibiotic, oxytetracycline. Catalyzes the C-4 hydroxylation of 6-methylpretetramide to yield the intermediate 4-hydroxyl-6-methylpretetramid, which is subsequently hydroxylated by OxyL to yield 4-keto-anhydrotetracycline. OxyE serves as the ancillary enzyme to assist OxyL in the hydroxylation of C-4. This is 6-methylpretetramide 4-monooxygenase from Streptomyces rimosus.